A 239-amino-acid chain; its full sequence is 1-(5-phosphoribosyl)-5-[(5-phosphoribosylamino)methylideneamino] imidazole-4-carboxamide isomerase (239 aa).

The active-site Proton acceptor is the Asp-8. Catalysis depends on Asp-129, which acts as the Proton donor.

It belongs to the HisA/HisF family.

The protein resides in the cytoplasm. The catalysed reaction is 1-(5-phospho-beta-D-ribosyl)-5-[(5-phospho-beta-D-ribosylamino)methylideneamino]imidazole-4-carboxamide = 5-[(5-phospho-1-deoxy-D-ribulos-1-ylimino)methylamino]-1-(5-phospho-beta-D-ribosyl)imidazole-4-carboxamide. It functions in the pathway amino-acid biosynthesis; L-histidine biosynthesis; L-histidine from 5-phospho-alpha-D-ribose 1-diphosphate: step 4/9. The protein is 1-(5-phosphoribosyl)-5-[(5-phosphoribosylamino)methylideneamino] imidazole-4-carboxamide isomerase of Bacillus cereus (strain B4264).